We begin with the raw amino-acid sequence, 717 residues long: Ribosomal RNA large subunit methyltransferase K/L (717 aa).

The THUMP domain occupies 45–142 (GAYRICLGSR…DKRSGVQTVQ (98 aa)).

Belongs to the methyltransferase superfamily. RlmKL family.

The protein resides in the cytoplasm. It carries out the reaction guanosine(2445) in 23S rRNA + S-adenosyl-L-methionine = N(2)-methylguanosine(2445) in 23S rRNA + S-adenosyl-L-homocysteine + H(+). The enzyme catalyses guanosine(2069) in 23S rRNA + S-adenosyl-L-methionine = N(2)-methylguanosine(2069) in 23S rRNA + S-adenosyl-L-homocysteine + H(+). Specifically methylates the guanine in position 2445 (m2G2445) and the guanine in position 2069 (m7G2069) of 23S rRNA. The sequence is that of Ribosomal RNA large subunit methyltransferase K/L from Hahella chejuensis (strain KCTC 2396).